Reading from the N-terminus, the 343-residue chain is MKIKALSKLKPEEGIWMTEVDKPVLGHNDLLIKIKKTAICGTDVHIYNWDEWSQKTIPVPMVVGHEYVGEVVGIGQEVRGFEIGDRVSGEGHITCGHCRNCRGGRTHLCRNTIGVGVNRTGCFSEYLVIPAFNAFKIPANISDDLASIFDPFGNAVHTALSFDLVGEDVLITGAGPIGIMAAAVAKHVGARHVVITDVNEYRLDLARKMGVTRAVNVAEQKLDDVMVELGMTEGFDVGLEMSGNPSAFNSMLKTMNHGGRIALLGIPPSDMGIDWNQVIFKGLVIKGIYGREMFETWYKMASLIQSGLDLTPIITHHFKVDDFQQGFDIMRSGMSGKVILDWE.

Cysteine 40 is a Zn(2+) binding site. Residues threonine 42 and histidine 45 each act as charge relay system in the active site. 6 residues coordinate Zn(2+): histidine 65, glutamate 66, cysteine 95, cysteine 98, cysteine 101, and cysteine 109. NAD(+) is bound by residues isoleucine 177, aspartate 197, arginine 202, 264-266, and 288-289; these read LGI and IY.

It belongs to the zinc-containing alcohol dehydrogenase family. In terms of assembly, homotetramer. Zn(2+) is required as a cofactor.

Its subcellular location is the cytoplasm. The catalysed reaction is L-threonine + NAD(+) = (2S)-2-amino-3-oxobutanoate + NADH + H(+). The protein operates within amino-acid degradation; L-threonine degradation via oxydo-reductase pathway; glycine from L-threonine: step 1/2. In terms of biological role, catalyzes the NAD(+)-dependent oxidation of L-threonine to 2-amino-3-ketobutyrate. In Vibrio vulnificus (strain YJ016), this protein is L-threonine 3-dehydrogenase.